Here is a 1368-residue protein sequence, read N- to C-terminus: Inactive tyrosine-protein kinase PRAG1 (1368 aa).

A disordered region spans residues 200–236 (CLKGPRPCTSPQPLRESLPSEDDSDQRCSPSGDSEGG). Tyrosine 238 carries the phosphotyrosine; by CSK modification. The interval 297–330 (STANPPHLGPKKPSLNSEAASSSDGLSCGSSRSG) is disordered. Over residues 317–330 (SSSDGLSCGSSRSG) the composition is skewed to low complexity. A phosphotyrosine; by CSK mark is found at tyrosine 343 and tyrosine 391. 3 disordered regions span residues 392-443 (AESA…PNAA), 499-605 (LSSR…GAWS), and 636-792 (HSNS…KKIV). Polar residues predominate over residues 414–434 (VSSGQVWTGDTWSQKTPSGWS). Residues 502 to 518 (RESHPHNMTENSSKEKP) are compositionally biased toward basic and acidic residues. Low complexity-rich tracts occupy residues 522–535 (PKLS…SPVS) and 550–563 (SGSS…SRVP). Composition is skewed to polar residues over residues 564 to 574 (TNLTSSCQTNG) and 652 to 666 (SGQN…SKSA). Serine 667 and serine 716 each carry phosphoserine. Composition is skewed to polar residues over residues 707–717 (VSQSSAESLSP) and 725–741 (SFTT…SRTC). Phosphoserine is present on residues serine 753 and serine 797. Disordered stretches follow at residues 799–818 (PDGF…SPKL) and 873–901 (NSKG…VSSQ). Over residues 887 to 901 (AATSTSSSQLSVSSQ) the composition is skewed to low complexity. The tract at residues 906-949 (SSQLQLHSLLSSISSKEGTYAKLGGLYTQSLARLVTKCEDLFMG) is required for homodimerization. The Protein kinase domain occupies 940–1291 (VTKCEDLFMG…EAKRVLQCLL (352 aa)). Over residues 1134–1144 (SSPGPSANPSV) the composition is skewed to polar residues. Residues 1134–1166 (SSPGPSANPSVPTTTSRCPSAAPAATTACQGGP) form a disordered region. The segment covering 1145–1162 (PTTTSRCPSAAPAATTAC) has biased composition (low complexity). The tract at residues 1293 to 1368 (GPRRELVEQP…LQSLKLLQLL (76 aa)) is required for homodimerization.

This sequence belongs to the protein kinase superfamily. In terms of assembly, homodimer. Dimerization leads to the catalytic activation of CSK. Interacts (via C-terminus) with RND2. Interacts with CSK (via SH2 domain) in a Tyr-391 phosphorylation-dependent manner; this interaction potentiates kinase activity of CSK. Interacts with NOTCH1 intracellular domain (N1ICD). Forms a complex with N1ICD and MAML1, in a MAML1-dependent manner. In terms of processing, phosphorylated by CSK on Tyr-238, Tyr-343, and Tyr-391; Tyr-391 is a primary site of phosphorylation. As to expression, highly-expressed in brain, including cortical and hippocampal pyramidal neurons, as well as in kidney, spleen, colon and small intestine.

Its subcellular location is the cytoplasm. It is found in the nucleus. It localises to the cell junction. The protein localises to the focal adhesion. Catalytically inactive protein kinase that acts as a scaffold protein. Functions as an effector of the small GTPase RND2, which stimulates RhoA activity and inhibits NGF-induced neurite outgrowth. Promotes Src family kinase (SFK) signallig by regulating the subcellular localization of CSK, a negative regulator of these kinases, leading to the regulation of cell morphology and motility by a CSK-dependent mechanism. Acts as a critical coactivator of Notch signaling. The polypeptide is Inactive tyrosine-protein kinase PRAG1 (Rattus norvegicus (Rat)).